The following is a 267-amino-acid chain: tRNA pseudouridine synthase A (267 aa).

Aspartate 55 (nucleophile) is an active-site residue. Tyrosine 111 contacts substrate.

The protein belongs to the tRNA pseudouridine synthase TruA family.

It catalyses the reaction uridine(38/39/40) in tRNA = pseudouridine(38/39/40) in tRNA. In terms of biological role, formation of pseudouridine at positions 38, 39 and 40 in the anticodon stem and loop of transfer RNAs. The sequence is that of tRNA pseudouridine synthase A from Thermococcus onnurineus (strain NA1).